A 250-amino-acid chain; its full sequence is MSGHSKWATTKHKKAALDAKRGKLFAKLIKNVEVAARTGGGDPDGNPTLYDAIQKARKNSVPQDNIERARKRGAGEEAGGADWQTIMYEGYGPNGVAVLVECLTDNRNRAAGEVRTAMTRNGGSMADAGSVAYLFNRKGVVLLPKNGLSEDDVLSAVLEAGAEEINDLGESYEILTEPSDLVDVRKALQAEGIEYDSAETNFLASVNVPLDADGARKLFKLIDVLEDCDDVQNVFANFDVSDEVLEEVNA.

The protein belongs to the TACO1 family.

The protein localises to the cytoplasm. This is Probable transcriptional regulatory protein SACE_2018 from Saccharopolyspora erythraea (strain ATCC 11635 / DSM 40517 / JCM 4748 / NBRC 13426 / NCIMB 8594 / NRRL 2338).